We begin with the raw amino-acid sequence, 298 residues long: N-acetylmuramic acid 6-phosphate etherase (298 aa).

Positions 55–218 (IHAQVSGGGR…STGLMIKSGK (164 aa)) constitute an SIS domain. Catalysis depends on glutamate 83, which acts as the Proton donor. Glutamate 114 is an active-site residue.

Belongs to the GCKR-like family. MurNAc-6-P etherase subfamily. In terms of assembly, homodimer.

It carries out the reaction N-acetyl-D-muramate 6-phosphate + H2O = N-acetyl-D-glucosamine 6-phosphate + (R)-lactate. It functions in the pathway amino-sugar metabolism; 1,6-anhydro-N-acetylmuramate degradation. It participates in amino-sugar metabolism; N-acetylmuramate degradation. Its pathway is cell wall biogenesis; peptidoglycan recycling. Its function is as follows. Specifically catalyzes the cleavage of the D-lactyl ether substituent of MurNAc 6-phosphate, producing GlcNAc 6-phosphate and D-lactate. Together with AnmK, is also required for the utilization of anhydro-N-acetylmuramic acid (anhMurNAc) either imported from the medium or derived from its own cell wall murein, and thus plays a role in cell wall recycling. This Escherichia coli O8 (strain IAI1) protein is N-acetylmuramic acid 6-phosphate etherase.